A 446-amino-acid polypeptide reads, in one-letter code: Phosphoglucosamine mutase (446 aa).

Residue Ser-101 is the Phosphoserine intermediate of the active site. Residues Ser-101, Asp-240, Asp-242, and Asp-244 each contribute to the Mg(2+) site. Position 101 is a phosphoserine (Ser-101).

This sequence belongs to the phosphohexose mutase family. The cofactor is Mg(2+). Post-translationally, activated by phosphorylation.

It carries out the reaction alpha-D-glucosamine 1-phosphate = D-glucosamine 6-phosphate. Functionally, catalyzes the conversion of glucosamine-6-phosphate to glucosamine-1-phosphate. The polypeptide is Phosphoglucosamine mutase (Pseudomonas putida (strain W619)).